A 298-amino-acid chain; its full sequence is Interferon-inducible double-stranded RNA-dependent protein kinase activator A homolog B (298 aa).

DRBM domains lie at 20–87 (TPIQ…ILRG), 112–180 (NPVG…KFKT), and 225–293 (DYVK…YLKI).

This sequence belongs to the PRKRA family. Homodimer. Interacts with dicer1 and eif2ak2/pkr. Also able to interact with dsRNA. Associates with ribosomes. Expressed in brain, heart, kidney, liver, nerve and spleen.

It localises to the cytoplasm. The protein localises to the perinuclear region. The protein resides in the nucleus. Its subcellular location is the nucleolus. Functionally, activates eif2ak2/pkr in the absence of double-stranded RNA (dsRNA), leading to phosphorylation of eif2s1/efi2-alpha and inhibition of translation and induction of apoptosis. Required for siRNA production by dicer1 and for subsequent siRNA-mediated post-transcriptional gene silencing. Does not seem to be required for processing of pre-miRNA to miRNA by dicer1. This Xenopus laevis (African clawed frog) protein is Interferon-inducible double-stranded RNA-dependent protein kinase activator A homolog B (prkra-b).